The primary structure comprises 102 residues: Protein V2 (102 aa).

In terms of biological role, may be involved in the regulation of ssDNA versus dsDNA levels. This Beet curly top virus (strain California/Logan) (BCTV) protein is Protein V2.